The sequence spans 158 residues: MNLTHINEEGRARMVDVSDKDETKREAVAIGSIYMKSETLRRIHEGTIKKGDVLAVAQVAGIMAAKNTSHMIPMCHPIMITGCDISFSLDFENSKIDIKAVVKTVGQTGVEMEALTAVTVAALTIYDMCKAIDRDMVISEIMLVKKSGGKSGLYEREV.

Substrate is bound by residues 74–76 and 112–113; these read MCH and ME. Residue D127 is part of the active site.

The protein belongs to the MoaC family. Homohexamer; trimer of dimers.

The enzyme catalyses (8S)-3',8-cyclo-7,8-dihydroguanosine 5'-triphosphate = cyclic pyranopterin phosphate + diphosphate. It functions in the pathway cofactor biosynthesis; molybdopterin biosynthesis. In terms of biological role, catalyzes the conversion of (8S)-3',8-cyclo-7,8-dihydroguanosine 5'-triphosphate to cyclic pyranopterin monophosphate (cPMP). The protein is Cyclic pyranopterin monophosphate synthase of Thermoanaerobacter sp. (strain X514).